We begin with the raw amino-acid sequence, 474 residues long: Aspartyl/glutamyl-tRNA(Asn/Gln) amidotransferase subunit B (474 aa).

It belongs to the GatB/GatE family. GatB subfamily. In terms of assembly, heterotrimer of A, B and C subunits.

It carries out the reaction L-glutamyl-tRNA(Gln) + L-glutamine + ATP + H2O = L-glutaminyl-tRNA(Gln) + L-glutamate + ADP + phosphate + H(+). The enzyme catalyses L-aspartyl-tRNA(Asn) + L-glutamine + ATP + H2O = L-asparaginyl-tRNA(Asn) + L-glutamate + ADP + phosphate + 2 H(+). Functionally, allows the formation of correctly charged Asn-tRNA(Asn) or Gln-tRNA(Gln) through the transamidation of misacylated Asp-tRNA(Asn) or Glu-tRNA(Gln) in organisms which lack either or both of asparaginyl-tRNA or glutaminyl-tRNA synthetases. The reaction takes place in the presence of glutamine and ATP through an activated phospho-Asp-tRNA(Asn) or phospho-Glu-tRNA(Gln). The sequence is that of Aspartyl/glutamyl-tRNA(Asn/Gln) amidotransferase subunit B from Desulfotalea psychrophila (strain LSv54 / DSM 12343).